The following is a 396-amino-acid chain: KiSS-1 receptor (396 aa).

Residues 1–46 (MAAEATLGPNVSWWAPSNASGCPGCGVNASDGPGSAPRPLDAWLVP) lie on the Extracellular side of the membrane. 3 N-linked (GlcNAc...) asparagine glycosylation sites follow: Asn10, Asn18, and Asn28. Residues 47–67 (LFFAALMLLGLVGNSLVIFVI) traverse the membrane as a helical segment. The Cytoplasmic portion of the chain corresponds to 68-90 (CRHKHMQTVTNFYIANLAATDVT). The helical transmembrane segment at 91 to 111 (FLLCCVPFTALLYPLPTWVLG) threads the bilayer. Residues 112–120 (DFMCKFVNY) lie on the Extracellular side of the membrane. An intrachain disulfide couples Cys115 to Cys191. A helical transmembrane segment spans residues 121–138 (IQQVSVQATCATLTAMSV). Topologically, residues 139-159 (DRWYVTVFPLRALHRRTPRLA) are cytoplasmic. The chain crosses the membrane as a helical span at residues 160 to 180 (LTVSLSIWVGSAAVSAPVLAL). Residues 181-202 (HRLSPGPHTYCSEAFPSRALER) are Extracellular-facing. A helical transmembrane segment spans residues 203–223 (AFALYNLLALYLLPLLATCAC). At 224–264 (YGAMLRHLGRAAVRPAPTDGALQGQLLAQRAGAVRTKVSRL) the chain is on the cytoplasmic side. The chain crosses the membrane as a helical span at residues 265 to 285 (VAAVVLLFAACWGPIQLFLVL). Over 286-305 (QALGPSGAWHPRSYAAYALK) the chain is Extracellular. A helical transmembrane segment spans residues 306–326 (IWAHCMSYSNSALNPLLYAFL). At 327–396 (GSHFRQAFCR…SVQDEHTAPL (70 aa)) the chain is on the cytoplasmic side. The tract at residues 346-396 (RRPHASAHSDRAAPHSVPHSRAAHPVRVRTPEPGNPVRRSPSVQDEHTAPL) is disordered.

It belongs to the G-protein coupled receptor 1 family. Highest expression levels in the cerebrum and cecum. Moderate expression in the ovary, colon and placenta. Low levels in the uterus, small intestine, and thymus. Expressed only moderately in the placenta. No expression in kidney tissues. Has a complex and abundant central nervous system expression pattern. Expressed in brain regions such as pons, midbrain, thalamus, hypothalamus, hippocampus, amygdala, cortex, frontal cortex, and striatum. No expression in the cerebellum. Persistent expression is detected in hypothalamus throughout postnatal development, with maximum expression levels at puberty in both male and female. Hypothalamic expression changed throughout the estrus cycle and is significantly increased after gonadectomy, a rise that is prevented by sex steroid replacement both in males and females.

Its subcellular location is the cell membrane. Functionally, receptor for metastin, a C-terminally amidated peptide of KiSS1. KiSS1 is a metastasis suppressor protein. Activation of the receptor inhibits cell proliferation and cell migration, key characteristics of tumor metastasis. The receptor is essential for normal gonadotropin-released hormone physiology and for puberty. The hypothalamic KiSS1/KISS1R system is a pivotal factor in central regulation of the gonadotropic axis at puberty and in adulthood. Analysis of the transduction pathways activated by the receptor identifies coupling to phospholipase C and intracellular calcium release through pertussis toxin-insensitive G(q) proteins. The sequence is that of KiSS-1 receptor (Kiss1r) from Rattus norvegicus (Rat).